The sequence spans 356 residues: 4-hydroxy-3-methylbut-2-en-1-yl diphosphate synthase (flavodoxin) (356 aa).

4 residues coordinate [4Fe-4S] cluster: Cys262, Cys265, Cys297, and Glu304.

It belongs to the IspG family. Requires [4Fe-4S] cluster as cofactor.

The catalysed reaction is (2E)-4-hydroxy-3-methylbut-2-enyl diphosphate + oxidized [flavodoxin] + H2O + 2 H(+) = 2-C-methyl-D-erythritol 2,4-cyclic diphosphate + reduced [flavodoxin]. The protein operates within isoprenoid biosynthesis; isopentenyl diphosphate biosynthesis via DXP pathway; isopentenyl diphosphate from 1-deoxy-D-xylulose 5-phosphate: step 5/6. Converts 2C-methyl-D-erythritol 2,4-cyclodiphosphate (ME-2,4cPP) into 1-hydroxy-2-methyl-2-(E)-butenyl 4-diphosphate. The chain is 4-hydroxy-3-methylbut-2-en-1-yl diphosphate synthase (flavodoxin) from Campylobacter fetus subsp. fetus (strain 82-40).